A 523-amino-acid polypeptide reads, in one-letter code: Cytochrome P450 monooxygenase bsc5 (523 aa).

Residues 16-36 traverse the membrane as a helical segment; sequence MQLHWTVLGLLPVLFIAILGP. Asn-178, Asn-281, and Asn-403 each carry an N-linked (GlcNAc...) asparagine glycan. Cys-459 contacts heme.

This sequence belongs to the cytochrome P450 family. Requires heme as cofactor.

The protein resides in the membrane. It participates in mycotoxin biosynthesis. Its function is as follows. Cytochrome P450 monooxygenase; part of the gene cluster that mediates the biosynthesis of the diterpene glucoside brassicicene C. In the first step of the brassicicene C biosynthesis, the bifunctional diterpene synthase bsc8 that possesses both prenyl transferase and terpene cyclase activity, converts isopentenyl diphosphate and dimethylallyl diphosphate into geranylgeranyl diphosphate (GGDP) that is further converted into fusicocca-2,10(14)-diene, the first precursor for brassicicene C. Fusicocca-2,10(14)-diene is then substrate of cytochrome P450 monooxygenase bsc1 for hydroxylation at the C-8 position. Oxidation at C-16 position to aldehyde is then catalyzed by the cytochrome P450 monooyxygenase bsc7, yielding fusicocca-2,10(14)-diene-8-beta,16-diol. Follows the isomerization of the double bond and reduction of aldehyde to alcohol catalyzed by the short-chain dehydrogenase/reductase bsc3 to yield the diol compound fusicocca-1,10(14)-diene-8 beta,16-diol. The next step is the oxidation at the C-3 position of fusicocca-2,10(14)-diene-8-beta,16-diol catalyzed by the alpha-ketoglutarate dependent dioxygenase bsc9, to produce a triol compound. Methylation of the hydroxy group at position 16 is performed by the methyltransferase bsc6. 16-O-methylation is followed by oxidation at the C-13 position to ketone and an alkyl shift of the methyl group leads to brassicicene C. Although the probable acetyltransferase bsc4 is included in the gene cluster, no acetylation reactions are necessary for brassicicene C biosynthesis. However, the fact that brassicicene E, which is a structurally related compound having an acetoxy group at position 12, was previously isolated from another strain of A.brassicicola suggests that the ATCC 96836 strain might also produce a small amount of brassicicene E. This Alternaria brassicicola (Dark leaf spot agent) protein is Cytochrome P450 monooxygenase bsc5.